The following is a 135-amino-acid chain: uncharacterized protein (135 aa).

Belongs to the MG067/MG068/MG395 family.

This is an uncharacterized protein from Mycoplasma pneumoniae (strain ATCC 29342 / M129 / Subtype 1) (Mycoplasmoides pneumoniae).